The following is a 390-amino-acid chain: Flavohemoprotein (390 aa).

An N-acetylserine modification is found at Ser-2. One can recognise a Globin domain in the interval 12–149 (PLTPTEINFL…LAQTLIDAEA (138 aa)). Residue His-96 participates in heme b binding. Active-site charge relay system residues include Tyr-106 and Glu-148. The reductase stretch occupies residues 157–390 (WEEFKDFRVT…EFFGPTDPDC (234 aa)). An FAD-binding FR-type domain is found at 158–263 (EEFKDFRVTK…HAPVGTMKYD (106 aa)). FAD-binding positions include Tyr-196 and 214 to 217 (REYS). 277 to 282 (GIGITP) is an NADP(+) binding site. Residue 382–385 (FFGP) participates in FAD binding.

It belongs to the globin family. Two-domain flavohemoproteins subfamily. In the C-terminal section; belongs to the flavoprotein pyridine nucleotide cytochrome reductase family. The cofactor is FAD. Requires heme b as cofactor.

It is found in the cytoplasm. The catalysed reaction is 2 nitric oxide + NADPH + 2 O2 = 2 nitrate + NADP(+) + H(+). It carries out the reaction 2 nitric oxide + NADH + 2 O2 = 2 nitrate + NAD(+) + H(+). Its function is as follows. Is involved in NO detoxification in an aerobic process, termed nitric oxide dioxygenase (NOD) reaction that utilizes O(2) and NAD(P)H to convert NO to nitrate, which protects the fungus from various noxious nitrogen compounds. Therefore, plays a central role in the inducible response to nitrosative stress. Functionally, in the presence of oxygen and NADH, it has NADH oxidase activity, which leads to the generation of superoxide and H(2)O(2). Under anaerobic conditions, it also exhibits nitric oxide reductase and FAD reductase activities. However, all these reactions are much lower than NOD activity. This is Flavohemoprotein from Candida norvegensis (Yeast).